A 215-amino-acid polypeptide reads, in one-letter code: 16S rRNA (adenine(1408)-N(1))-methyltransferase (215 aa).

Residues G32, D55, 87-88 (AE), 102-107 (LMPWGS), and 191-193 (TSW) each bind S-adenosyl-L-methionine.

This sequence belongs to the methyltransferase superfamily. Kanamycin-apramycin resistance family.

The catalysed reaction is adenosine(1408) in 16S rRNA + S-adenosyl-L-methionine = N(1)-methyladenosine(1408) in 16S rRNA + S-adenosyl-L-homocysteine + H(+). In terms of biological role, specifically methylates the N(1) position of adenine 1408 in 16S rRNA. Confers resistance to various aminoglycosides, including kanamycin, neomycin and apramycin. The polypeptide is 16S rRNA (adenine(1408)-N(1))-methyltransferase (kamB) (Streptoalloteichus tenebrarius (strain ATCC 17920 / DSM 40477 / JCM 4838 / CBS 697.72 / NBRC 16177 / NCIMB 11028 / NRRL B-12390 / A12253. 1 / ISP 5477) (Streptomyces tenebrarius)).